Consider the following 256-residue polypeptide: MERQGLDLGLSLGLGLTTAATWPAAGFCLNSGMAEQEVIRRDDVVAATAAEDERFACSPGSPVSSGSGKRGSGSGSGDEVDDAGCDVGGGGARKKLRLSKDQAAVLEECFKTHHTLTPKQKVALAKSLNLRPRQVEVWFQNRRARTKLKQTEVDCEHLKRWCDQLADDNRRLHKELAELRALKATPTPPAAAPPLTTLTMCLSCKRVANAGVPSPAAAIFPGHPQFLCGFRDHAGAASSSYGGASSGLAKAVRAAR.

The tract at residues 56-86 (ACSPGSPVSSGSGKRGSGSGSGDEVDDAGCD) is disordered. The segment covering 58–67 (SPGSPVSSGS) has biased composition (low complexity). Positions 91 to 150 (GARKKLRLSKDQAAVLEECFKTHHTLTPKQKVALAKSLNLRPRQVEVWFQNRRARTKLKQ) form a DNA-binding region, homeobox. Positions 149–193 (KQTEVDCEHLKRWCDQLADDNRRLHKELAELRALKATPTPPAAAP) are leucine-zipper.

Belongs to the HD-ZIP homeobox family. Class II subfamily. Expressed in seedlings, roots, stems and panicles.

The protein localises to the nucleus. Its function is as follows. Probable transcription factor. The polypeptide is Homeobox-leucine zipper protein HOX28 (HOX28) (Oryza sativa subsp. indica (Rice)).